A 121-amino-acid polypeptide reads, in one-letter code: Prefoldin subunit beta (121 aa).

It belongs to the prefoldin subunit beta family. As to quaternary structure, heterohexamer of two alpha and four beta subunits.

It is found in the cytoplasm. Molecular chaperone capable of stabilizing a range of proteins. Seems to fulfill an ATP-independent, HSP70-like function in archaeal de novo protein folding. This Methanosphaerula palustris (strain ATCC BAA-1556 / DSM 19958 / E1-9c) protein is Prefoldin subunit beta.